Reading from the N-terminus, the 376-residue chain is 23S rRNA (uracil(747)-C(5))-methyltransferase RlmC (376 aa).

Positions 3, 11, 14, and 88 each coordinate [4Fe-4S] cluster. Gln213, Phe242, Glu263, and Asn308 together coordinate S-adenosyl-L-methionine. Catalysis depends on Cys335, which acts as the Nucleophile.

Belongs to the class I-like SAM-binding methyltransferase superfamily. RNA M5U methyltransferase family. RlmC subfamily.

The catalysed reaction is uridine(747) in 23S rRNA + S-adenosyl-L-methionine = 5-methyluridine(747) in 23S rRNA + S-adenosyl-L-homocysteine + H(+). Functionally, catalyzes the formation of 5-methyl-uridine at position 747 (m5U747) in 23S rRNA. This chain is 23S rRNA (uracil(747)-C(5))-methyltransferase RlmC, found in Vibrio vulnificus (strain CMCP6).